The following is a 280-amino-acid chain: uncharacterized protein (280 aa).

Positions 1–21 are cleaved as a signal peptide; sequence MRPAIKVGLSTASVYPLRAEA.

It to M.leprae ML2432 and S.coelicolor SCO3347.

This is an uncharacterized protein from Mycobacterium tuberculosis (strain CDC 1551 / Oshkosh).